Here is a 610-residue protein sequence, read N- to C-terminus: Pentatricopeptide repeat-containing protein At5g40400 (610 aa).

PPR repeat units follow at residues 165–199 (DPVV…GFSV), 200–234 (SVVT…GIHP), 235–269 (NTYT…GFEP), 270–304 (DLVT…RVVP), 305–339 (DLVT…GIKP), 340–374 (DCMS…SVVP), 375–409 (DRFT…KVDI), 410–445 (PFEV…GHEA), 446–480 (KPET…NQVL), 481–515 (DAKT…EVKP), 516–546 (DSFI…FAME), and 551–586 (DPES…GFVP).

This sequence belongs to the PPR family. P subfamily.

This chain is Pentatricopeptide repeat-containing protein At5g40400, found in Arabidopsis thaliana (Mouse-ear cress).